We begin with the raw amino-acid sequence, 609 residues long: MSSKHWNYKQDLVHAHLKGLCHANPDLQFIESERVVINKHSKPDKVMILSGGGSGHEPLHAGFVGEGCLDVGVAGFVFASPSTKQIVSGLKAKPSDKGTLIVVKNYTGDILHFGLAAERAKAEGVPVELLIVQDDVSVGRTKNGMVGRRGLAGTSLVHKIVGAKAAKDSNKASLSEVYQLGEAVVANLVTIGASLDHCTIPGNRHHESESDDEDEQKHLLKEDEIEVGMGIHNESGIKRVSPIPTIDTLVADLLKYLLDKSDEERHYVDFDSSDEVVLMINNLGGTSNLELYAIQNTVVEQLATDYKIKPARVYTGAYTTSLDGPGFSITLLNVTRAGGKEVFDCLDYPTKVPGWNSSYTTAEWAAKSESFVIDAPPVSDASATSKVRFSSSTVKAVLESGCKKLLTKEPKITLYDTVAGDGDCGETLANGAHAILDLLAADKLEITDGVRSLTQITDVVETAMGGTSGGLYSIFISALAKSLKDRELQQGGYEVTPQILAASLKDALESLYRYTRARAGDRTLIDALAPFVEQFAASKGDLNQANKACHEGAESTRKLKAKFGRASYVSEEEFKPFEAEGGLPDPGAIGLAALVDGFAEAYSKIGSNL.

Positions 8–355 constitute a DhaK domain; the sequence is YKQDLVHAHL…LDYPTKVPGW (348 aa). Substrate is bound by residues 53–56, Lys-104, and Asp-109; that span reads GSGH. His-232 serves as the catalytic Tele-hemiaminal-histidine intermediate. A DhaL domain is found at 392–600; sequence STVKAVLESG…LAALVDGFAE (209 aa). ATP is bound by residues 421–424, 467–468, 523–524, and 585–587; these read DGDC, TS, TL, and DPG.

This sequence belongs to the dihydroxyacetone kinase (DAK) family.

The enzyme catalyses dihydroxyacetone + ATP = dihydroxyacetone phosphate + ADP + H(+). It catalyses the reaction D-glyceraldehyde + ATP = D-glyceraldehyde 3-phosphate + ADP + H(+). It functions in the pathway polyol metabolism; glycerol fermentation; glycerone phosphate from glycerol (oxidative route): step 2/2. Catalyzes both the phosphorylation of dihydroxyacetone and of glyceraldehyde. In Pichia angusta (Yeast), this protein is Dihydroxyacetone kinase (DAK).